Here is a 156-residue protein sequence, read N- to C-terminus: Arginine repressor (156 aa).

Belongs to the ArgR family.

The protein localises to the cytoplasm. It participates in amino-acid biosynthesis; L-arginine biosynthesis [regulation]. Regulates arginine biosynthesis genes. The sequence is that of Arginine repressor from Shewanella sp. (strain ANA-3).